Reading from the N-terminus, the 177-residue chain is Putative fimbrin-like protein FimI (177 aa).

The N-terminal stretch at 1–19 (MIRKGAALVGLVLMSPVIA) is a signal peptide. An intrachain disulfide couples Cys40 to Cys81.

This sequence belongs to the fimbrial protein family.

It is found in the fimbrium. In Salmonella typhi, this protein is Putative fimbrin-like protein FimI (fimI).